A 100-amino-acid chain; its full sequence is Urease subunit gamma (100 aa).

This sequence belongs to the urease gamma subunit family. As to quaternary structure, heterotrimer of UreA (gamma), UreB (beta) and UreC (alpha) subunits. Three heterotrimers associate to form the active enzyme.

The protein localises to the cytoplasm. It carries out the reaction urea + 2 H2O + H(+) = hydrogencarbonate + 2 NH4(+). It participates in nitrogen metabolism; urea degradation; CO(2) and NH(3) from urea (urease route): step 1/1. The polypeptide is Urease subunit gamma (Prochlorococcus marinus (strain MIT 9301)).